Reading from the N-terminus, the 463-residue chain is Cysteine--tRNA ligase (463 aa).

Cys-27 provides a ligand contact to Zn(2+). A 'HIGH' region motif is present at residues 29–39 (ATVQGLPHIGH). Residues Cys-205, His-230, and Glu-234 each coordinate Zn(2+). A 'KMSKS' region motif is present at residues 261-265 (KMSKS). Lys-264 contacts ATP.

It belongs to the class-I aminoacyl-tRNA synthetase family. Monomer. Requires Zn(2+) as cofactor.

The protein localises to the cytoplasm. The enzyme catalyses tRNA(Cys) + L-cysteine + ATP = L-cysteinyl-tRNA(Cys) + AMP + diphosphate. The chain is Cysteine--tRNA ligase from Mycolicibacterium vanbaalenii (strain DSM 7251 / JCM 13017 / BCRC 16820 / KCTC 9966 / NRRL B-24157 / PYR-1) (Mycobacterium vanbaalenii).